Here is a 492-residue protein sequence, read N- to C-terminus: BTB/POZ domain and ankyrin repeat-containing protein NOOT2 (492 aa).

Positions 25–107 (SDVTFQVEGR…LYSGQVSIVP (83 aa)) constitute a BTB domain. The C2HC NPR-type zinc finger occupies 113–127 (RPNCGERGCWHTHCT). 4 residues coordinate Zn(2+): cysteine 116, cysteine 121, histidine 123, and cysteine 126. ANK repeat units lie at residues 248-277 (QKIR…LNLD), 278-307 (EALA…DVNY), 312-341 (AGKT…DPTV), and 345-379 (DGVT…KLRL). Disordered regions lie at residues 395-439 (ENNA…NSIG) and 455-492 (TQMG…SHDF). Composition is skewed to low complexity over residues 397 to 413 (NASN…SSAA) and 425 to 439 (SSSS…NSIG). Positions 461–473 (DDNRHNNSHREAM) are enriched in basic and acidic residues.

This sequence belongs to the plant 'ANKYRIN-BTB/POZ' family. 'NOOT-BOP-COCH-like' (NBCL) subfamily. As to quaternary structure, homodimer.

It localises to the nucleus. It is found in the cytoplasm. Its subcellular location is the cell membrane. It functions in the pathway protein modification; protein ubiquitination. May act as a substrate-specific adapter of an E3 ubiquitin-protein ligase complex (CUL3-RBX1-BTB) which mediates the ubiquitination and subsequent proteasomal degradation of target proteins. Transcriptional co-regulator involved in the promotion of leaf and floral meristem fate and determinacy. Required for the abscission of senescent organs, probably by regulating the cell wall disorganization in abscission zones (AZs, e.g. pulvini at the base of leaves). Involved in the coordination of the symbiotic nodule developmental program; promotes the formation of root nodules by interacting directly with APP1 to modulate the expression of the nuclear transcription factor Y subunit (NF-YA1), a key nodulin. Involved in the regulation of indeterminate nodule identity in association with NOOT1. The chain is BTB/POZ domain and ankyrin repeat-containing protein NOOT2 from Medicago truncatula (Barrel medic).